A 1189-amino-acid chain; its full sequence is Ras-specific guanine nucleotide-releasing factor 2 (1189 aa).

A PH 1 domain is found at 22-133 (EGTKRGFLSK…WMEAIHQASY (112 aa)). The stretch at 158-193 (KIATNQLRHQLEDQDTEIERLKSEIVALNKTKERMR) forms a coiled coil. One can recognise an IQ domain in the interval 205–234 (DIKKIKKVQSFMRGWLCRRKWKTIVQDYIC). One can recognise a DH domain in the interval 243–429 (KRNQIVFTMV…EELSRVMHDE (187 aa)). The region spanning 470-588 (PSVERGKLSK…WMSDISQCVD (119 aa)) is the PH 2 domain. The N-terminal Ras-GEF domain occupies 635–755 (KVPQIRYASV…LTSSLNSRIG (121 aa)). The interval 713–738 (VDGKSPRLCRKFSSPPPLAVSRTSSP) is disordered. Phosphoserine is present on residues Ser-725 and Ser-726. Ser-736 bears the Phosphoserine; by CDK5 mark. The tract at residues 743 to 751 (KLSLTSSLN) is regulates proteasomal degradation. Ser-745 and Ser-749 each carry phosphoserine. The segment at 757–817 (LDLTNSSSSS…TPRHLRYRQP (61 aa)) is disordered. Over residues 762–776 (SSSSSSPTTTTHSPA) the composition is skewed to low complexity. Phosphoserine occurs at positions 801, 805, and 924. Residues 954–1186 (SAMELAEQIT…YELSLKIEPR (233 aa)) enclose the Ras-GEF domain. The interval 1051–1080 (ALNRSAIYRLKKTWAKVSKQTKALMDKLQK) is responsible of the affinity for farnesylated versus geranylgeranylated Ras.

In terms of assembly, homooligomer and heterooligomer with RASGRF1. Interacts with Ras and RAC1. Interacts in a calcium-dependent manner with calmodulin. Interacts with EPB49 and probably CDK5R1. Interacts with the AMPA receptor through GRIA1. Interacts with microtubules. Post-translationally, phosphorylated by CDK5; down-regulates RASGRF2-mediated RAC1 activation. In terms of processing, ubiquitinated upon interaction with Ras. Ubiquitination leads to degradation through the 26S proteasome. As to expression, expressed in brain in the nucleus of the solitary tract. Not observed in the hippocampus (at protein level).

It localises to the cytoplasm. The protein localises to the cell membrane. Its subcellular location is the endoplasmic reticulum membrane. Its function is as follows. Functions as a calcium-regulated nucleotide exchange factor activating both Ras and RAC1 through the exchange of bound GDP for GTP. Preferentially activates HRAS in vivo compared to RRAS based on their different types of prenylation. Functions in synaptic plasticity by contributing to the induction of long term potentiation. This is Ras-specific guanine nucleotide-releasing factor 2 (Rasgrf2) from Mus musculus (Mouse).